Reading from the N-terminus, the 285-residue chain is Bifunctional protein FolD (285 aa).

NADP(+) contacts are provided by residues 165 to 167 (GRS), S190, and I231.

The protein belongs to the tetrahydrofolate dehydrogenase/cyclohydrolase family. As to quaternary structure, homodimer.

The enzyme catalyses (6R)-5,10-methylene-5,6,7,8-tetrahydrofolate + NADP(+) = (6R)-5,10-methenyltetrahydrofolate + NADPH. It catalyses the reaction (6R)-5,10-methenyltetrahydrofolate + H2O = (6R)-10-formyltetrahydrofolate + H(+). Its pathway is one-carbon metabolism; tetrahydrofolate interconversion. Functionally, catalyzes the oxidation of 5,10-methylenetetrahydrofolate to 5,10-methenyltetrahydrofolate and then the hydrolysis of 5,10-methenyltetrahydrofolate to 10-formyltetrahydrofolate. This chain is Bifunctional protein FolD, found in Acetivibrio thermocellus (strain ATCC 27405 / DSM 1237 / JCM 9322 / NBRC 103400 / NCIMB 10682 / NRRL B-4536 / VPI 7372) (Clostridium thermocellum).